Consider the following 985-residue polypeptide: UPF0182 protein Cgl0786/cg0896 (985 aa).

7 helical membrane-spanning segments follow: residues 19–39 (VTWI…SVGF), 63–83 (IVLF…AGYF), 115–135 (VMVI…QRSW), 176–196 (SMML…MGGI), 215–235 (TQLA…YWLD), 262–282 (KIIL…AIFL), and 290–310 (LAVV…PLML). The segment at 904 to 944 (KEAQDIEEVDGTATTPSTDETDTDTDQPATETPTAPVSEAE) is disordered. Low complexity predominate over residues 929–939 (DQPATETPTAP).

This sequence belongs to the UPF0182 family.

It is found in the cell membrane. The protein is UPF0182 protein Cgl0786/cg0896 of Corynebacterium glutamicum (strain ATCC 13032 / DSM 20300 / JCM 1318 / BCRC 11384 / CCUG 27702 / LMG 3730 / NBRC 12168 / NCIMB 10025 / NRRL B-2784 / 534).